We begin with the raw amino-acid sequence, 138 residues long: Small ribosomal subunit protein uS11c (138 aa).

Residues 1 to 22 (MAKSIPRISSRRNGPIGSGKTV) are disordered.

The protein belongs to the universal ribosomal protein uS11 family. In terms of assembly, part of the 30S ribosomal subunit.

The protein resides in the plastid. This Cuscuta exaltata (Tall dodder) protein is Small ribosomal subunit protein uS11c.